The chain runs to 64 residues: Large ribosomal subunit protein bL35 (64 aa).

This sequence belongs to the bacterial ribosomal protein bL35 family.

The sequence is that of Large ribosomal subunit protein bL35 from Shewanella oneidensis (strain ATCC 700550 / JCM 31522 / CIP 106686 / LMG 19005 / NCIMB 14063 / MR-1).